Here is a 384-residue protein sequence, read N- to C-terminus: MNKSDSFYNLETIGGILLFIAAVLAIITANSPYRVGYEYFLSINGSVSVGNMSITKPLLLWINDGLMAIYFLLIGLEIKREVNRGILSDKTNLLVPALTALAGLLFPALIFIFFNAHHPVYLKGWAIPTATDIAFTLGIVSLLGSRVPFSLKILLTAIAIFDDIAAIVIIALFYTEQLSLLSLSLALVFTLILIGLNYFKCRRISVFMLFGVALWIAVLKSGVHATLAGIVIAMTIPDEGKESMLTRLEDGLHHWVVFLILPLFAFANAGVSFVGLDASMLTHPVVLGIGLGLFLGKQLGIFLSLGYFVQFKKFLKADKVNLAQVYGIALICGVGFTMSLFIGSLAYQNYDLSLMPMVKIGVVFGSFIAGLTGFLVLKMTSLKR.

A run of 11 helical transmembrane segments spans residues 7–27 (FYNLETIGGILLFIAAVLAII), 58–78 (LLLWINDGLMAIYFLLIGLEI), 94–114 (LVPALTALAGLLFPALIFIFF), 124–144 (GWAIPTATDIAFTLGIVSLLG), 153–173 (ILLTAIAIFDDIAAIVIIALF), 179–199 (SLLSLSLALVFTLILIGLNYF), 204–224 (ISVFMLFGVALWIAVLKSGVH), 256–276 (VVFLILPLFAFANAGVSFVGL), 285–305 (VVLGIGLGLFLGKQLGIFLSL), 325–345 (VYGIALICGVGFTMSLFIGSL), and 357–377 (MVKIGVVFGSFIAGLTGFLVL).

This sequence belongs to the NhaA Na(+)/H(+) (TC 2.A.33) antiporter family.

It is found in the cell inner membrane. It catalyses the reaction Na(+)(in) + 2 H(+)(out) = Na(+)(out) + 2 H(+)(in). In terms of biological role, na(+)/H(+) antiporter that extrudes sodium in exchange for external protons. This is Na(+)/H(+) antiporter NhaA from Legionella pneumophila (strain Corby).